Consider the following 155-residue polypeptide: DNA-directed RNA polymerases I, II, and III subunit RPABC2 (155 aa).

A compositionally biased stretch (acidic residues) spans 1-19 (MSDYEEAFNDGNENFEDFD). A disordered region spans residues 1–57 (MSDYEEAFNDGNENFEDFDVEHFSDEETYEEKPQFKDGETTDANGKTIVTGGNGPED). Residues 20-39 (VEHFSDEETYEEKPQFKDGE) show a composition bias toward basic and acidic residues. Residue Ser24 is modified to Phosphoserine. The tract at residues 111–132 (LEGETDPLRIAMKELAEKKIPL) is leucine-zipper.

Belongs to the archaeal Rpo6/eukaryotic RPB6 RNA polymerase subunit family. In terms of assembly, component of the RNA polymerase I (Pol I), RNA polymerase II (Pol II) and RNA polymerase III (Pol III) complexes. Component of the RNA polymerase I (Pol I) complex consisting of 14 subunits: RPA135, RPA190, RPC40, RPA14, RPB5, RPO26, RPA43, RPB8, RPA12, RPB10, RPC19, RPC10, RPA49 and RPA34. The complex is composed of a horseshoe-shaped core containing ten subunits (RPA135, RPA190, RPB5, RPO26, RPB8, RPB10, RPC10, RPA12, RPC19 and RPC40) where RPA135 and RPA190 form the DNA-binding cleft. Outside of the core, RPA14 and RPA43 form the stalk that mediates interactions with transcription initiation factors and newly synthesized RNA. Component of the RNA polymerase II (Pol II) complex consisting of 12 subunits: RPO21, RPB2, RPB3, RPB4, RPB5, RPO26, RPB7, RPB8, RPB9, RPB10 and RPC10. Component of the RNA polymerase III (Pol III) complex consisting of 17 subunits.

It localises to the cytoplasm. The protein resides in the nucleus. Its function is as follows. DNA-dependent RNA polymerases catalyze the transcription of DNA into RNA using the four ribonucleoside triphosphates as substrates. Common component of RNA polymerases I, II and III which synthesize ribosomal RNA precursors, mRNA precursors and many functional non-coding RNAs, and small RNAs, such as 5S rRNA and tRNAs, respectively. Pol II is the central component of the basal RNA polymerase II transcription machinery. RNA polymerases are composed of mobile elements that move relative to each other. In Pol II, RPB6 is part of the clamp element and together with parts of RPB1 and RPB2 forms a pocket to which the RPB4-RPB7 subcomplex binds. The protein is DNA-directed RNA polymerases I, II, and III subunit RPABC2 (RPO26) of Saccharomyces cerevisiae (strain ATCC 204508 / S288c) (Baker's yeast).